Consider the following 304-residue polypeptide: Acetylglutamate kinase (304 aa).

Residues 70-71 (GG), Arg92, and Asn185 each bind substrate.

It belongs to the acetylglutamate kinase family. ArgB subfamily.

It localises to the cytoplasm. The catalysed reaction is N-acetyl-L-glutamate + ATP = N-acetyl-L-glutamyl 5-phosphate + ADP. It participates in amino-acid biosynthesis; L-arginine biosynthesis; N(2)-acetyl-L-ornithine from L-glutamate: step 2/4. Its function is as follows. Catalyzes the ATP-dependent phosphorylation of N-acetyl-L-glutamate. This is Acetylglutamate kinase from Paracoccus denitrificans (strain Pd 1222).